The chain runs to 146 residues: Large ribosomal subunit protein uL11 (146 aa).

This sequence belongs to the universal ribosomal protein uL11 family. In terms of assembly, part of the ribosomal stalk of the 50S ribosomal subunit. Interacts with L10 and the large rRNA to form the base of the stalk. L10 forms an elongated spine to which L12 dimers bind in a sequential fashion forming a multimeric L10(L12)X complex. In terms of processing, one or more lysine residues are methylated.

In terms of biological role, forms part of the ribosomal stalk which helps the ribosome interact with GTP-bound translation factors. The polypeptide is Large ribosomal subunit protein uL11 (Corynebacterium kroppenstedtii (strain DSM 44385 / JCM 11950 / CIP 105744 / CCUG 35717)).